A 311-amino-acid polypeptide reads, in one-letter code: Cytochrome c biogenesis protein CcsA (311 aa).

Helical transmembrane passes span 11-31, 44-64, 68-88, 101-121, 146-166, 217-237, 251-268, and 280-300; these read VLLL…LAFW, VVQL…LWRW, GHFP…GCTF, LVPA…SFAL, VIMM…AVLF, TITV…VWAN, TWAL…HTRL, and VAVS…LLGI.

Belongs to the CcmF/CycK/Ccl1/NrfE/CcsA family. In terms of assembly, may interact with ccs1.

Its subcellular location is the cellular thylakoid membrane. Its function is as follows. Required during biogenesis of c-type cytochromes (cytochrome c6 and cytochrome f) at the step of heme attachment. The chain is Cytochrome c biogenesis protein CcsA from Synechococcus sp. (strain RCC307).